Consider the following 320-residue polypeptide: MKVLWAALLVAFLAGCQGKVEQVVEPELEPEPELHQQADWQSGQPWELALGRFWDYLRWVQTLSEQVQEELLSSQVTQELTALMDETMKELKAYKSELEEQLSPVAEETRARLSKELQAAQARLGADMEDVRSRLAQYRSEVQAMLGQSTEELRARLASHLRKLRKRLLRDVDDLQKRLAVYQAGAREGAERGVSAIRERLGPLVEQGRARAATVGSSLAGQPLQERAQAWGERLRARMEEVGSRTRDRLDEVKEQVEEVRAKLEEQAQQMRLQAEAFQARLKSWFEPLVEDMQRQWAGLVEKVQAAVGASAAPVPSDNH.

The N-terminal stretch at 1–18 (MKVLWAALLVAFLAGCQG) is a signal peptide. 8 repeat units span residues 82–103 (ALMD…EQLS), 104–125 (PVAE…ARLG), 126–147 (ADME…AMLG), 148–169 (QSTE…KRLL), 170–191 (RDVD…EGAE), 192–213 (RGVS…ARAA), 214–236 (TVGS…ERLR), and 237–258 (ARME…EQVE). An 8 X 22 AA approximate tandem repeats region spans residues 82–258 (ALMDETMKEL…RLDEVKEQVE (177 aa)). Met145 is subject to Methionine sulfoxide. Ser149 carries the phosphoserine modification. Positions 160–170 (HLRKLRKRLLR) are LDL and other lipoprotein receptors binding. 164–167 (LRKR) lines the heparin pocket. Positions 212-293 (AATVGSSLAG…SWFEPLVEDM (82 aa)) are lipid-binding and lipoprotein association. 232 to 239 (GERLRARM) contributes to the heparin binding site. The interval 269–320 (QQMRLQAEAFQARLKSWFEPLVEDMQRQWAGLVEKVQAAVGASAAPVPSDNH) is homooligomerization. The segment at 281–293 (RLKSWFEPLVEDM) is specificity for association with VLDL.

This sequence belongs to the apolipoprotein A1/A4/E family. In terms of assembly, homotetramer. May interact with ABCA1; functionally associated with ABCA1 in the biogenesis of HDLs. May interact with APP/A4 amyloid-beta peptide; the interaction is extremely stable in vitro but its physiological significance is unclear. May interact with MAPT. May interact with MAP2. In the cerebrospinal fluid, interacts with secreted SORL1. Interacts with PMEL; this allows the loading of PMEL luminal fragment on ILVs to induce fibril nucleation. Post-translationally, APOE exists as multiple glycosylated and sialylated glycoforms within cells and in plasma. The extent of glycosylation and sialylation are tissue and context specific. Glycated in plasma VLDL. In terms of processing, phosphorylated by FAM20C in the extracellular medium.

It localises to the secreted. Its subcellular location is the extracellular space. The protein resides in the extracellular matrix. It is found in the extracellular vesicle. The protein localises to the endosome. It localises to the multivesicular body. APOE is an apolipoprotein, a protein associating with lipid particles, that mainly functions in lipoprotein-mediated lipid transport between organs via the plasma and interstitial fluids. APOE is a core component of plasma lipoproteins and is involved in their production, conversion and clearance. Apolipoproteins are amphipathic molecules that interact both with lipids of the lipoprotein particle core and the aqueous environment of the plasma. As such, APOE associates with chylomicrons, chylomicron remnants, very low density lipoproteins (VLDL) and intermediate density lipoproteins (IDL) but shows a preferential binding to high-density lipoproteins (HDL). It also binds a wide range of cellular receptors including the LDL receptor/LDLR, the LDL receptor-related proteins LRP1, LRP2 and LRP8 and the very low-density lipoprotein receptor/VLDLR that mediate the cellular uptake of the APOE-containing lipoprotein particles. Finally, APOE also has a heparin-binding activity and binds heparan-sulfate proteoglycans on the surface of cells, a property that supports the capture and the receptor-mediated uptake of APOE-containing lipoproteins by cells. A main function of APOE is to mediate lipoprotein clearance through the uptake of chylomicrons, VLDLs, and HDLs by hepatocytes. APOE is also involved in the biosynthesis by the liver of VLDLs as well as their uptake by peripheral tissues ensuring the delivery of triglycerides and energy storage in muscle, heart and adipose tissues. By participating in the lipoprotein-mediated distribution of lipids among tissues, APOE plays a critical role in plasma and tissues lipid homeostasis. APOE is also involved in two steps of reverse cholesterol transport, the HDLs-mediated transport of cholesterol from peripheral tissues to the liver, and thereby plays an important role in cholesterol homeostasis. First, it is functionally associated with ABCA1 in the biogenesis of HDLs in tissues. Second, it is enriched in circulating HDLs and mediates their uptake by hepatocytes. APOE also plays an important role in lipid transport in the central nervous system, regulating neuron survival and sprouting. The chain is Apolipoprotein E (APOE) from Plecturocebus moloch (Dusky titi monkey).